We begin with the raw amino-acid sequence, 173 residues long: 2-C-methyl-D-erythritol 2,4-cyclodiphosphate synthase (173 aa).

A divalent metal cation is bound by residues aspartate 17 and histidine 19. 4-CDP-2-C-methyl-D-erythritol 2-phosphate is bound by residues 17 to 19 and 49 to 50; these read DVH and HS. Histidine 57 lines the a divalent metal cation pocket. 4-CDP-2-C-methyl-D-erythritol 2-phosphate is bound by residues 76–80, 147–150, phenylalanine 154, and arginine 157; these read FPNTD and TTTE.

The protein belongs to the IspF family. Homotrimer. It depends on a divalent metal cation as a cofactor.

The enzyme catalyses 4-CDP-2-C-methyl-D-erythritol 2-phosphate = 2-C-methyl-D-erythritol 2,4-cyclic diphosphate + CMP. It functions in the pathway isoprenoid biosynthesis; isopentenyl diphosphate biosynthesis via DXP pathway; isopentenyl diphosphate from 1-deoxy-D-xylulose 5-phosphate: step 4/6. In terms of biological role, involved in the biosynthesis of isopentenyl diphosphate (IPP) and dimethylallyl diphosphate (DMAPP), two major building blocks of isoprenoid compounds. Catalyzes the conversion of 4-diphosphocytidyl-2-C-methyl-D-erythritol 2-phosphate (CDP-ME2P) to 2-C-methyl-D-erythritol 2,4-cyclodiphosphate (ME-CPP) with a corresponding release of cytidine 5-monophosphate (CMP). This Ehrlichia chaffeensis (strain ATCC CRL-10679 / Arkansas) protein is 2-C-methyl-D-erythritol 2,4-cyclodiphosphate synthase.